The chain runs to 102 residues: Small ubiquitin-related modifier 1 (102 aa).

The Ubiquitin-like domain occupies 21-98 (DYIKLKVIGQ…IEVYQEQTGG (78 aa)). Residue glycine 98 forms a Glycyl lysine isopeptide (Gly-Lys) (interchain with K-? in acceptor proteins) linkage. A propeptide spanning residues 99–102 (HSTI) is cleaved from the precursor.

The protein belongs to the ubiquitin family. SUMO subfamily. As to quaternary structure, interacts with sae2, ube2i, ranbp2, pias1 and pias2. Interacts with sox9 and sox10. Covalently attached to a number of proteins. In terms of processing, cleavage of precursor form by a sentrin-specific protease is necessary for function.

The protein resides in the nucleus membrane. Its subcellular location is the nucleus speckle. It localises to the cytoplasm. The protein localises to the nucleus. It is found in the PML body. The protein resides in the cell membrane. Functionally, ubiquitin-like protein that can be covalently attached to proteins as a monomer or a lysine-linked polymer. Covalent attachment via an isopeptide bond to its substrates requires prior activation by the E1 complex sae1-sae2 and linkage to the E2 enzyme ube2i. This post-translational modification on lysine residues of proteins plays a crucial role in a number of cellular processes such as nuclear transport, DNA replication and repair, mitosis and signal transduction. Polymeric sumo1 chains are also susceptible to polyubiquitination which functions as a signal for proteasomal degradation of modified proteins. The sequence is that of Small ubiquitin-related modifier 1 (sumo1) from Xenopus tropicalis (Western clawed frog).